We begin with the raw amino-acid sequence, 189 residues long: Elongation factor P (189 aa).

N6-(3,6-diaminohexanoyl)-5-hydroxylysine is present on K34.

Belongs to the elongation factor P family. May be beta-lysylated on the epsilon-amino group of Lys-34 by the combined action of EpmA and EpmB, and then hydroxylated on the C5 position of the same residue by EpmC (if this protein is present). Lysylation is critical for the stimulatory effect of EF-P on peptide-bond formation. The lysylation moiety may extend toward the peptidyltransferase center and stabilize the terminal 3-CCA end of the tRNA. Hydroxylation of the C5 position on Lys-34 may allow additional potential stabilizing hydrogen-bond interactions with the P-tRNA.

The protein localises to the cytoplasm. The protein operates within protein biosynthesis; polypeptide chain elongation. Functionally, involved in peptide bond synthesis. Alleviates ribosome stalling that occurs when 3 or more consecutive Pro residues or the sequence PPG is present in a protein, possibly by augmenting the peptidyl transferase activity of the ribosome. Modification of Lys-34 is required for alleviation. The protein is Elongation factor P of Halorhodospira halophila (strain DSM 244 / SL1) (Ectothiorhodospira halophila (strain DSM 244 / SL1)).